We begin with the raw amino-acid sequence, 293 residues long: N-acetylmannosamine kinase (293 aa).

ATP contacts are provided by residues alanine 5–lysine 12 and glycine 133–isoleucine 140. The Zn(2+) site is built by histidine 157, cysteine 167, cysteine 169, and cysteine 174.

The protein belongs to the ROK (NagC/XylR) family. NanK subfamily. As to quaternary structure, homodimer.

It carries out the reaction an N-acyl-D-mannosamine + ATP = an N-acyl-D-mannosamine 6-phosphate + ADP + H(+). It functions in the pathway amino-sugar metabolism; N-acetylneuraminate degradation; D-fructose 6-phosphate from N-acetylneuraminate: step 2/5. Functionally, catalyzes the phosphorylation of N-acetylmannosamine (ManNAc) to ManNAc-6-P. This chain is N-acetylmannosamine kinase, found in Vibrio vulnificus (strain YJ016).